A 470-amino-acid chain; its full sequence is Sugar transporter ESL1 (470 aa).

An Essential for the localization to the vacuole membrane motif is present at residues 10–16 (LEAGLLL). 12 helical membrane-spanning segments follow: residues 28–48 (ITAV…CFGC), 68–88 (VAQY…GAIF), 99–119 (KGTM…VALA), 130–150 (LSTG…IAEI), 157–177 (GAFV…FYVI), 186–206 (LALI…FIPE), 268–288 (VVIG…GLMY), 303–323 (IGSM…LILV), 332–352 (LLAS…SFCF), 368–388 (IGVV…PWII), 404–424 (LVTL…NFML), and 430–450 (GTFL…YAMV).

This sequence belongs to the major facilitator superfamily. Sugar transporter (TC 2.A.1.1) family. Expressed in both shoots and roots. In roots, strongly expressed in pericycle and xylem parenchyma cells, and to a lesser extent in the root endodermis. In flowers, expressed in sepals.

Its subcellular location is the vacuole membrane. The protein resides in the vesicle. Functionally, sugar transporter. Transports monosaccharides across the vacuolar membrane independently from a proton gradient. May function coordinately with the vacuolar invertase to regulate osmotic pressure by affecting the accumulation of sugar in the cells under abiotic stress conditions. The polypeptide is Sugar transporter ESL1 (Arabidopsis thaliana (Mouse-ear cress)).